A 313-amino-acid polypeptide reads, in one-letter code: Protein sprouty homolog 2 (313 aa).

Polar residues predominate over residues 1-14; the sequence is METRVQHGSGSQAL. Disordered regions lie at residues 1 to 31 and 54 to 146; these read METR…PDLR and EYTE…VADG. Basic and acidic residues-rich tracts occupy residues 17–31 and 78–89; these read ARRD…PDLR and KSERPHGLPEHR. Positions 108 to 131 are enriched in low complexity; the sequence is SRSISTVSTGSRSSTRTSTSSNSS. Residues 132 to 141 are compositionally biased toward polar residues; it reads EQRLLGSSSG. Residues 175-289 form the SPR domain; that stretch reads RCEDCGKCKC…CYDRVNRPGC (115 aa).

This sequence belongs to the sprouty family. As to expression, brain and interlimb region.

It is found in the cytoplasm. It localises to the membrane. In terms of biological role, acts as an antagonist of FGF-induced retinal lens fiber differentiation. Inhibits TGFB-induced epithelial-to-mesenchymal transition in retinal lens epithelial cells. May play an important role in FGF-mediated patterning of the mid/hindbrain region by acting to modulate the signaling effects of FGF8. This Gallus gallus (Chicken) protein is Protein sprouty homolog 2 (SPRY2).